The sequence spans 393 residues: Phospho-N-acetylmuramoyl-pentapeptide-transferase (393 aa).

10 helical membrane-spanning segments follow: residues 29–49 (RAVM…PWVI), 75–95 (TPTM…LLWF), 101–121 (FVWV…VDDW), 138–158 (YLWQ…SVSE), 194–214 (VSYP…IVGA), 226–246 (GLAI…AYVT), 263–283 (AGEL…FLWF), 290–310 (VFMG…IAVI), 315–335 (IVLG…MAQV), and 370–390 (QVVV…LSTL).

The protein belongs to the glycosyltransferase 4 family. MraY subfamily. The cofactor is Mg(2+).

The protein localises to the cell inner membrane. The catalysed reaction is UDP-N-acetyl-alpha-D-muramoyl-L-alanyl-gamma-D-glutamyl-meso-2,6-diaminopimeloyl-D-alanyl-D-alanine + di-trans,octa-cis-undecaprenyl phosphate = di-trans,octa-cis-undecaprenyl diphospho-N-acetyl-alpha-D-muramoyl-L-alanyl-D-glutamyl-meso-2,6-diaminopimeloyl-D-alanyl-D-alanine + UMP. The protein operates within cell wall biogenesis; peptidoglycan biosynthesis. Its function is as follows. Catalyzes the initial step of the lipid cycle reactions in the biosynthesis of the cell wall peptidoglycan: transfers peptidoglycan precursor phospho-MurNAc-pentapeptide from UDP-MurNAc-pentapeptide onto the lipid carrier undecaprenyl phosphate, yielding undecaprenyl-pyrophosphoryl-MurNAc-pentapeptide, known as lipid I. This chain is Phospho-N-acetylmuramoyl-pentapeptide-transferase, found in Leptothrix cholodnii (strain ATCC 51168 / LMG 8142 / SP-6) (Leptothrix discophora (strain SP-6)).